A 621-amino-acid chain; its full sequence is Pre-mRNA-processing protein 45 (621 aa).

Disordered regions lie at residues Met-1–Gly-73, Ser-137–Glu-164, Ala-220–Pro-251, Arg-347–Met-438, and Gly-542–Ser-621. Residues Pro-36–Pro-51 show a composition bias toward low complexity. 2 stretches are compositionally biased toward basic and acidic residues: residues Thr-140–Glu-164 and Ala-220–Arg-229. The segment covering Pro-239–Arg-248 has biased composition (pro residues). Basic and acidic residues predominate over residues Gly-364–Pro-380. Positions Asp-403 to Gly-417 are enriched in acidic residues. 2 stretches are compositionally biased toward basic and acidic residues: residues Ala-418–Arg-437 and Glu-594–Ser-621.

The protein belongs to the SNW family. Associated with the spliceosome.

It is found in the nucleus. Functionally, involved in pre-mRNA splicing. This chain is Pre-mRNA-processing protein 45 (PRP45), found in Mycosarcoma maydis (Corn smut fungus).